The chain runs to 216 residues: Adenylate kinase (216 aa).

10–15 (GSGKGT) serves as a coordination point for ATP. Residues 30–59 (STGDMLRAAVKEGTPMGVKAKAKMDAGALV) are NMP. AMP-binding positions include T31, R36, 57–59 (ALV), 85–88 (GFPR), and Q92. An LID region spans residues 126–163 (GRRTCRDCGKMYHVEFDAPAVADKCDKCGGQLFQRDDD). Position 127 (R127) interacts with ATP. Zn(2+) is bound by residues C130, C133, C150, and C153. The AMP site is built by R160 and R171. K199 contributes to the ATP binding site.

It belongs to the adenylate kinase family. Monomer.

The protein localises to the cytoplasm. The catalysed reaction is AMP + ATP = 2 ADP. It participates in purine metabolism; AMP biosynthesis via salvage pathway; AMP from ADP: step 1/1. Functionally, catalyzes the reversible transfer of the terminal phosphate group between ATP and AMP. Plays an important role in cellular energy homeostasis and in adenine nucleotide metabolism. The sequence is that of Adenylate kinase from Syntrophotalea carbinolica (strain DSM 2380 / NBRC 103641 / GraBd1) (Pelobacter carbinolicus).